Here is a 120-residue protein sequence, read N- to C-terminus: Ribonuclease P protein component (120 aa).

The protein belongs to the RnpA family. Consists of a catalytic RNA component (M1 or rnpB) and a protein subunit.

It catalyses the reaction Endonucleolytic cleavage of RNA, removing 5'-extranucleotides from tRNA precursor.. RNaseP catalyzes the removal of the 5'-leader sequence from pre-tRNA to produce the mature 5'-terminus. It can also cleave other RNA substrates such as 4.5S RNA. The protein component plays an auxiliary but essential role in vivo by binding to the 5'-leader sequence and broadening the substrate specificity of the ribozyme. This is Ribonuclease P protein component from Desulfotalea psychrophila (strain LSv54 / DSM 12343).